The chain runs to 309 residues: Taste receptor type 2 member 8 (309 aa).

Over 1 to 7 (MFSPADN) the chain is Extracellular. The chain crosses the membrane as a helical span at residues 8–28 (IFIILITGEFILGILGNGYIA). The Cytoplasmic segment spans residues 29–50 (LVNWIDWIKKKKISTVDYILTN). A helical membrane pass occupies residues 51–71 (LVIARICLISVMVVNGIVIVL). The Extracellular segment spans residues 72–82 (NPDVYTKNKQQ). A helical membrane pass occupies residues 83–103 (IVIFTFWTFANYLNMWITTCL). Residues 104–131 (NVFYFLKIASSSHPLFLWLKWKIDMVVH) are Cytoplasmic-facing. A helical transmembrane segment spans residues 132–152 (WILLGCFAISLLVSLIAAIVL). Topologically, residues 153–184 (SCDYRFHAIAKHKRNITEMFHVSKIPYFEPLT) are extracellular. Asn-167 carries N-linked (GlcNAc...) asparagine glycosylation. Residues 185–205 (LFNLFAIVPFIVSLISFFLLV) traverse the membrane as a helical segment. Topologically, residues 206–239 (RSLWRHTKQIKLYATGSRDPSTEVHVRAIKTMTS) are cytoplasmic. Residues 240 to 260 (FIFFFFLYYISSILMTFSYLM) form a helical membrane-spanning segment. Over 261–266 (TKYKLA) the chain is Extracellular. Residues 267–287 (VEFGEIAAILYPLGHSLILIV) form a helical membrane-spanning segment. At 288–309 (LNNKLRQTFVRMLTCRKIACMI) the chain is on the cytoplasmic side.

It belongs to the G-protein coupled receptor T2R family. In terms of tissue distribution, expressed in subsets of taste receptor cells of the tongue and palate epithelium and exclusively in gustducin-positive cells.

Its subcellular location is the membrane. Its function is as follows. Receptor that may play a role in the perception of bitterness and is gustducin-linked. May play a role in sensing the chemical composition of the gastrointestinal content. The activity of this receptor may stimulate alpha gustducin, mediate PLC-beta-2 activation and lead to the gating of TRPM5. The polypeptide is Taste receptor type 2 member 8 (TAS2R8) (Homo sapiens (Human)).